We begin with the raw amino-acid sequence, 131 residues long: D-ribose pyranase (131 aa).

His20 functions as the Proton donor in the catalytic mechanism. Substrate is bound by residues Asp28, His98, and 120 to 122 (YAN).

It belongs to the RbsD / FucU family. RbsD subfamily. In terms of assembly, homodecamer.

It is found in the cytoplasm. It carries out the reaction beta-D-ribopyranose = beta-D-ribofuranose. The protein operates within carbohydrate metabolism; D-ribose degradation; D-ribose 5-phosphate from beta-D-ribopyranose: step 1/2. Catalyzes the interconversion of beta-pyran and beta-furan forms of D-ribose. The polypeptide is D-ribose pyranase (Clostridium perfringens (strain SM101 / Type A)).